A 205-amino-acid chain; its full sequence is Holliday junction branch migration complex subunit RuvA (205 aa).

Positions 1 to 64 (MIGKLKGTID…EDQLKLFGFM (64 aa)) are domain I. The segment at 65–143 (SALEREWFNL…AFTGDAGSAI (79 aa)) is domain II. Residues 144-153 (GLKQELGEGV) form a flexible linker region. The tract at residues 153–205 (VASAPVSDAVSALTNLGYSRDQAANAIAAALKNGGEGADSAKLIRLGLKELSR) is domain III.

This sequence belongs to the RuvA family. In terms of assembly, homotetramer. Forms an RuvA(8)-RuvB(12)-Holliday junction (HJ) complex. HJ DNA is sandwiched between 2 RuvA tetramers; dsDNA enters through RuvA and exits via RuvB. An RuvB hexamer assembles on each DNA strand where it exits the tetramer. Each RuvB hexamer is contacted by two RuvA subunits (via domain III) on 2 adjacent RuvB subunits; this complex drives branch migration. In the full resolvosome a probable DNA-RuvA(4)-RuvB(12)-RuvC(2) complex forms which resolves the HJ.

The protein localises to the cytoplasm. The RuvA-RuvB-RuvC complex processes Holliday junction (HJ) DNA during genetic recombination and DNA repair, while the RuvA-RuvB complex plays an important role in the rescue of blocked DNA replication forks via replication fork reversal (RFR). RuvA specifically binds to HJ cruciform DNA, conferring on it an open structure. The RuvB hexamer acts as an ATP-dependent pump, pulling dsDNA into and through the RuvAB complex. HJ branch migration allows RuvC to scan DNA until it finds its consensus sequence, where it cleaves and resolves the cruciform DNA. This Allorhizobium ampelinum (strain ATCC BAA-846 / DSM 112012 / S4) (Agrobacterium vitis (strain S4)) protein is Holliday junction branch migration complex subunit RuvA.